Reading from the N-terminus, the 163-residue chain is Probable ribosome biogenesis protein RLP24 (163 aa).

The protein belongs to the eukaryotic ribosomal protein eL24 family. Associated with nucleolar and cytoplasmic pre-60S particles. At the end of biogenesis it dissociates from cytoplasmic pre-60S particles and is likely to be exchanged for its ribosomal homolog, RPL24.

The protein resides in the nucleus. It is found in the nucleolus. Functionally, involved in the biogenesis of the 60S ribosomal subunit. Ensures the docking of GTPBP4/NOG1 to pre-60S particles. This chain is Probable ribosome biogenesis protein RLP24 (Rsl24d1), found in Rattus norvegicus (Rat).